The following is a 1066-amino-acid chain: Isoleucine--tRNA ligase (1066 aa).

A 'HIGH' region motif is present at residues 49–59 (PYVSGAIHLGT). Residues 625 to 629 (KMSKS) carry the 'KMSKS' region motif. Residue K628 participates in ATP binding.

It belongs to the class-I aminoacyl-tRNA synthetase family. IleS type 2 subfamily. Monomer. The cofactor is Zn(2+).

It is found in the cytoplasm. The enzyme catalyses tRNA(Ile) + L-isoleucine + ATP = L-isoleucyl-tRNA(Ile) + AMP + diphosphate. Functionally, catalyzes the attachment of isoleucine to tRNA(Ile). As IleRS can inadvertently accommodate and process structurally similar amino acids such as valine, to avoid such errors it has two additional distinct tRNA(Ile)-dependent editing activities. One activity is designated as 'pretransfer' editing and involves the hydrolysis of activated Val-AMP. The other activity is designated 'posttransfer' editing and involves deacylation of mischarged Val-tRNA(Ile). This chain is Isoleucine--tRNA ligase, found in Pyrococcus horikoshii (strain ATCC 700860 / DSM 12428 / JCM 9974 / NBRC 100139 / OT-3).